The primary structure comprises 219 residues: Dual specificity phosphatase 29 (219 aa).

In terms of domain architecture, Tyrosine-protein phosphatase spans 53-201 (HVNEVWPKLY…LRELDRQLVQ (149 aa)). Position 145–152 (145–152 (HCVMGRSR)) interacts with substrate. C146 functions as the Phosphocysteine intermediate in the catalytic mechanism.

This sequence belongs to the protein-tyrosine phosphatase family. Non-receptor class dual specificity subfamily. As to quaternary structure, homodimer. Interacts with PRKAA2.

It localises to the cytoplasm. It is found in the nucleus. It carries out the reaction O-phospho-L-tyrosyl-[protein] + H2O = L-tyrosyl-[protein] + phosphate. The enzyme catalyses O-phospho-L-seryl-[protein] + H2O = L-seryl-[protein] + phosphate. It catalyses the reaction O-phospho-L-threonyl-[protein] + H2O = L-threonyl-[protein] + phosphate. Dual specificity phosphatase able to dephosphorylate phosphotyrosine, phosphoserine and phosphothreonine residues within the same substrate, with a preference for phosphotyrosine as a substrate. Involved in the modulation of intracellular signaling cascades. May regulate glucose metabolism by activating, AMPK, an energy sensor protein kinase. Affects MAP kinase signaling though modulation of the ERK1/2 cascade in skeletal muscle promoting muscle cell differentiation, development and atrophy. This chain is Dual specificity phosphatase 29 (DUSP29), found in Bos taurus (Bovine).